Here is a 271-residue protein sequence, read N- to C-terminus: Phosphate import ATP-binding protein PstB 1 (271 aa).

Positions 24 to 266 constitute an ABC transporter domain; sequence MIGKDVSVYY…PDDPRTQDYI (243 aa). 56–63 is an ATP binding site; the sequence is GPSGCGKS.

It belongs to the ABC transporter superfamily. Phosphate importer (TC 3.A.1.7) family. As to quaternary structure, the complex is composed of two ATP-binding proteins (PstB), two transmembrane proteins (PstC and PstA) and a solute-binding protein (PstS).

Its subcellular location is the cell inner membrane. The enzyme catalyses phosphate(out) + ATP + H2O = ADP + 2 phosphate(in) + H(+). In terms of biological role, part of the ABC transporter complex PstSACB involved in phosphate import. Responsible for energy coupling to the transport system. In Rhizobium johnstonii (strain DSM 114642 / LMG 32736 / 3841) (Rhizobium leguminosarum bv. viciae), this protein is Phosphate import ATP-binding protein PstB 1.